The sequence spans 225 residues: 2-C-methyl-D-erythritol 4-phosphate cytidylyltransferase (225 aa).

The protein belongs to the IspD/TarI cytidylyltransferase family. IspD subfamily.

The catalysed reaction is 2-C-methyl-D-erythritol 4-phosphate + CTP + H(+) = 4-CDP-2-C-methyl-D-erythritol + diphosphate. It functions in the pathway isoprenoid biosynthesis; isopentenyl diphosphate biosynthesis via DXP pathway; isopentenyl diphosphate from 1-deoxy-D-xylulose 5-phosphate: step 2/6. In terms of biological role, catalyzes the formation of 4-diphosphocytidyl-2-C-methyl-D-erythritol from CTP and 2-C-methyl-D-erythritol 4-phosphate (MEP). The polypeptide is 2-C-methyl-D-erythritol 4-phosphate cytidylyltransferase (Cereibacter sphaeroides (strain KD131 / KCTC 12085) (Rhodobacter sphaeroides)).